The chain runs to 680 residues: Extracellular matrix protein 2 (680 aa).

An N-terminal signal peptide occupies residues 1-20; it reads MKFSSLYCFLLLLIFQTDFG. In terms of domain architecture, VWFC spans 100–157; sequence GHCLANGMIMYNKAVWSPEPCTTCLCLNGKVLCDETKCHPQMCPQTIIPEGECCPVCS. Positions 189 to 198 are enriched in acidic residues; sequence QLEEDEEEVK. Residues 189-293 are disordered; sequence QLEEDEEEVK…RLPIPATPRG (105 aa). A compositionally biased stretch (basic and acidic residues) spans 223–238; the sequence is QSREGKAQRPEEEGRQ. Residues 249-272 are compositionally biased toward acidic residues; sequence NEEDDDEEEEDDDDEEEDDDDEDE. The short motif at 275-277 is the Cell attachment site element; that stretch reads RGD. The 38-residue stretch at 288 to 325 folds into the LRRNT domain; it reads PATPRGIPSLPSMCSLSYKTISCISADLTQIPPLTAPE. 13 LRR repeats span residues 349 to 369, 375 to 396, 397 to 417, 420 to 440, 446 to 466, 467 to 488, 491 to 511, 517 to 538, 539 to 559, 563 to 583, 590 to 611, 613 to 634, and 642 to 665; these read NLERLDLSKNNITSSGIGPKA, NLMRLNMDGNNLVTIPSELPST, LEELKINENKLQVIDEESLSD, QLVTLELEGNNLSETNVNSLA, SLSYLRLGRNKFRIIPQGLPA, SIEELYLENNQIEEITEISFNH, KINVIGLRYNKIEENRIAPLA, NLESIDLSYNKLYHVPSYLPKS, LVHLVLIGNQIERIPGYVFGH, GLEYLYLSFNKLVDDGIDRVS, SLRELFLDHNELKSIPPGVQEM, ALHFLRLNNNKIRNILPEQICN, and NLQHLHLENNYIKTREIPSYAFSC. A glycan (N-linked (GlcNAc...) asparagine) is linked at asparagine 359. N-linked (GlcNAc...) asparagine glycosylation is present at asparagine 430. Residue asparagine 487 is glycosylated (N-linked (GlcNAc...) asparagine).

This sequence belongs to the small leucine-rich proteoglycan (SLRP) family. SLRP class I subfamily. As to quaternary structure, interacts with numerous extracellular matrix proteins. Interacts with MSL1 and RASSF1.

It is found in the secreted. Its subcellular location is the extracellular space. The protein localises to the extracellular matrix. Its function is as follows. Promotes matrix assembly and cell adhesiveness. This is Extracellular matrix protein 2 (ECM2) from Bos taurus (Bovine).